A 174-amino-acid chain; its full sequence is Repair DNA polymerase X (174 aa).

The tract at residues Arg42–Asp51 is involved in ssDNA binding. Residues Asp49 and Asp51 each coordinate Mg(2+). A disulfide bridge connects residues Cys81 and Cys86. Asp100 is a binding site for Mg(2+).

It belongs to the DNA polymerase type-X family. It depends on Mg(2+) as a cofactor.

The protein resides in the virion. It carries out the reaction DNA(n) + a 2'-deoxyribonucleoside 5'-triphosphate = DNA(n+1) + diphosphate. Error-prone polymerase lacking a proofreading 3'-5' exonuclease which catalyzes the gap-filling reaction during the DNA repair process. Specifically binds intermediates in the single-nucleotide base-excision repair process. Also catalyzes DNA polymerization with low nucleotide-insertion fidelity. Probably acts as a strategic DNA mutase, which gives rise to a rapid emergence of variants. Generates mismatched G-G pairs, in that case, the polymerase first binds the deoxynucleotide followed by mismatch formation. Together with the viral DNA ligase, fills the single nucleotide gaps generated by the AP endonuclease. Binds DNA with high affinity via the helix alphaE. The chain is Repair DNA polymerase X from African swine fever virus (isolate Tick/South Africa/Pretoriuskop Pr4/1996) (ASFV).